Here is a 203-residue protein sequence, read N- to C-terminus: 2-hydroxychromene-2-carboxylate isomerase (203 aa).

The Nucleophile role is filled by Ser11. Ser11 is a binding site for glutathione. Substrate contacts are provided by residues Lys43, 53–54 (NR), and Tyr84. Residues Val168 and 179 to 182 (WGND) contribute to the glutathione site.

Belongs to the GST superfamily. NadH family. It depends on glutathione as a cofactor.

The enzyme catalyses 2-hydroxychromene-2-carboxylate = (3E)-4-(2-hydroxyphenyl)-2-oxobut-3-enoate. The protein operates within aromatic compound metabolism; naphthalene degradation. Its function is as follows. Involved in the naphthalene catabolic pathway. Catalyzes the reversible glutathione-dependent isomerization of 2-hydroxychromene-2-carboxylate (HCCA) to trans-O-hydroxybenzylidenepyruvate (THBPA). This chain is 2-hydroxychromene-2-carboxylate isomerase (nahD), found in Pseudomonas putida (Arthrobacter siderocapsulatus).